The following is a 439-amino-acid chain: Ribosomal protein uS12 methylthiotransferase RimO (439 aa).

The 112-residue stretch at 5–116 folds into the MTTase N-terminal domain; it reads PTIAISHLGC…IVNVIERVEL (112 aa). [4Fe-4S] cluster contacts are provided by C14, C50, C79, C154, C158, and C161. A Radical SAM core domain is found at 140–369; it reads TTTEGVAYLR…MELQQPISQK (230 aa). The TRAM domain occupies 372-438; that stretch reads QQEVGKIVDV…TYDLYGQVVN (67 aa).

It belongs to the methylthiotransferase family. RimO subfamily. It depends on [4Fe-4S] cluster as a cofactor.

The protein localises to the cytoplasm. It catalyses the reaction L-aspartate(89)-[ribosomal protein uS12]-hydrogen + (sulfur carrier)-SH + AH2 + 2 S-adenosyl-L-methionine = 3-methylsulfanyl-L-aspartate(89)-[ribosomal protein uS12]-hydrogen + (sulfur carrier)-H + 5'-deoxyadenosine + L-methionine + A + S-adenosyl-L-homocysteine + 2 H(+). In terms of biological role, catalyzes the methylthiolation of an aspartic acid residue of ribosomal protein uS12. The chain is Ribosomal protein uS12 methylthiotransferase RimO from Nostoc punctiforme (strain ATCC 29133 / PCC 73102).